The chain runs to 779 residues: Aconitate hydratase, mitochondrial (779 aa).

A mitochondrion-targeting transit peptide spans Met-1 to Gln-28. Substrate contacts are provided by residues Gln-97 and Asp-190–His-192. Cys-383, Cys-446, and Cys-449 together coordinate [4Fe-4S] cluster. Substrate is bound by residues Arg-472, Arg-477, Arg-605, and Ser-668–Arg-669.

This sequence belongs to the aconitase/IPM isomerase family. Monomer. It depends on [4Fe-4S] cluster as a cofactor.

It is found in the mitochondrion. It carries out the reaction citrate = D-threo-isocitrate. Its pathway is carbohydrate metabolism; tricarboxylic acid cycle; isocitrate from oxaloacetate: step 2/2. Its function is as follows. Catalyzes the isomerization of citrate to isocitrate via cis-aconitate. The sequence is that of Aconitate hydratase, mitochondrial from Gracilaria gracilis (Red alga).